The primary structure comprises 492 residues: N-succinylglutamate 5-semialdehyde dehydrogenase (492 aa).

220 to 225 (GSANTG) contacts NAD(+). Catalysis depends on residues Glu-243 and Cys-277.

The protein belongs to the aldehyde dehydrogenase family. AstD subfamily.

It catalyses the reaction N-succinyl-L-glutamate 5-semialdehyde + NAD(+) + H2O = N-succinyl-L-glutamate + NADH + 2 H(+). The protein operates within amino-acid degradation; L-arginine degradation via AST pathway; L-glutamate and succinate from L-arginine: step 4/5. In terms of biological role, catalyzes the NAD-dependent reduction of succinylglutamate semialdehyde into succinylglutamate. The protein is N-succinylglutamate 5-semialdehyde dehydrogenase of Escherichia coli O9:H4 (strain HS).